We begin with the raw amino-acid sequence, 640 residues long: 1,4-alpha-glucan branching enzyme GlgB (640 aa).

The Nucleophile role is filled by D318. Residue E371 is the Proton donor of the active site.

This sequence belongs to the glycosyl hydrolase 13 family. GlgB subfamily. Monomer.

The catalysed reaction is Transfers a segment of a (1-&gt;4)-alpha-D-glucan chain to a primary hydroxy group in a similar glucan chain.. It functions in the pathway glycan biosynthesis; glycogen biosynthesis. In terms of biological role, catalyzes the formation of the alpha-1,6-glucosidic linkages in glycogen by scission of a 1,4-alpha-linked oligosaccharide from growing alpha-1,4-glucan chains and the subsequent attachment of the oligosaccharide to the alpha-1,6 position. The protein is 1,4-alpha-glucan branching enzyme GlgB of Francisella tularensis subsp. holarctica (strain LVS).